Here is a 92-residue protein sequence, read N- to C-terminus: Small ribosomal subunit protein bS18 (92 aa).

Positions 1–22 (MADERAPQRSTSGPRKKRPFQR) are disordered.

The protein belongs to the bacterial ribosomal protein bS18 family. Part of the 30S ribosomal subunit. Forms a tight heterodimer with protein bS6.

Functionally, binds as a heterodimer with protein bS6 to the central domain of the 16S rRNA, where it helps stabilize the platform of the 30S subunit. The protein is Small ribosomal subunit protein bS18 of Citrifermentans bemidjiense (strain ATCC BAA-1014 / DSM 16622 / JCM 12645 / Bem) (Geobacter bemidjiensis).